Reading from the N-terminus, the 447-residue chain is Signal recognition particle 54 kDa protein (447 aa).

GTP contacts are provided by residues 103-110 (GVQGSGKT), 185-189 (DTAGR), and 245-248 (TKMD).

The protein belongs to the GTP-binding SRP family. SRP54 subfamily. Part of the signal recognition particle protein translocation system, which is composed of SRP and FtsY. Archaeal SRP consists of a 7S RNA molecule of 300 nucleotides and two protein subunits: SRP54 and SRP19.

It is found in the cytoplasm. It carries out the reaction GTP + H2O = GDP + phosphate + H(+). Involved in targeting and insertion of nascent membrane proteins into the cytoplasmic membrane. Binds to the hydrophobic signal sequence of the ribosome-nascent chain (RNC) as it emerges from the ribosomes. The SRP-RNC complex is then targeted to the cytoplasmic membrane where it interacts with the SRP receptor FtsY. In Saccharolobus solfataricus (strain ATCC 35092 / DSM 1617 / JCM 11322 / P2) (Sulfolobus solfataricus), this protein is Signal recognition particle 54 kDa protein.